The primary structure comprises 325 residues: Glutarate 2-hydroxylase (325 aa).

Fe cation is bound by residues His160, Asp162, and His292.

Belongs to the glutarate hydroxylase family. As to quaternary structure, homotetramer. Fe(2+) serves as cofactor.

The enzyme catalyses glutarate + 2-oxoglutarate + O2 = (S)-2-hydroxyglutarate + succinate + CO2. It functions in the pathway amino-acid degradation. Acts as an alpha-ketoglutarate-dependent dioxygenase catalyzing hydroxylation of glutarate (GA) to L-2-hydroxyglutarate (L2HG). Functions in a L-lysine degradation pathway that proceeds via cadaverine, glutarate and L-2-hydroxyglutarate. This chain is Glutarate 2-hydroxylase, found in Escherichia coli (strain UTI89 / UPEC).